We begin with the raw amino-acid sequence, 584 residues long: Poly(A) RNA polymerase protein 2 (584 aa).

Residues 1-11 are compositionally biased toward polar residues; that stretch reads MGAKSVTASSS. Disordered stretches follow at residues 1–63 and 81–147; these read MGAK…LPKD and EGFD…QELE. Basic residues predominate over residues 12–35; sequence KKIKNRHNGKVKKSKKIKKVRKPQ. A compositionally biased stretch (basic and acidic residues) spans 53-63; it reads NEQETNKLPKD. Residues 130–139 show a composition bias toward acidic residues; sequence SEDEQAEQEE. The Mg(2+) site is built by Asp-236 and Asp-238. 4 residues coordinate ATP: Gly-301, Lys-326, Asn-431, and Arg-435. The region spanning 371–431 is the PAP-associated domain; sequence NLGVLLIEFF…AIQDPGDESN (61 aa). The tract at residues 525 to 584 is disordered; sequence TSTATATTTDDDYEITNPPAKKAKIEEKPESEPAKRNSGETYITVSSEDDDEDGYNPYTL. A compositionally biased stretch (basic and acidic residues) spans 547–562; the sequence is AKIEEKPESEPAKRNS.

It belongs to the DNA polymerase type-B-like family. In terms of assembly, component of the TRAMP complex (also called TRF4 complex) composed of at least HUL4, MTR4, PAP2/TRF4 and either AIR1 or AIR2. Interacts with NOP53 and POL2. Interacts directly with AIR2. Requires Mg(2+) as cofactor. Mn(2+) serves as cofactor.

It localises to the nucleus. The catalysed reaction is RNA(n) + ATP = RNA(n)-3'-adenine ribonucleotide + diphosphate. In terms of biological role, catalytic subunit of the TRAMP complex which has a poly(A) RNA polymerase activity and is involved in a post-transcriptional quality control mechanism limiting inappropriate expression of genetic information. Polyadenylation is required for the degradative activity of the exosome on several of its nuclear RNA substrates like cryptic transcripts generated by RNA polymerase II and III, or hypomethylated pre-tRNAi-Met. Polyadenylates RNA processing and degradation intermediates of snRNAs, snoRNAs and mRNAs that accumulate in strains lacking a functional exosome. TRF4 is also required for proper nuclear division in mitosis, DNA damage repair and sister chromatid cohesion. Involved in the regulation of histone mRNA levels. May mediate mitotic chromosome condensation. This Saccharomyces cerevisiae (strain ATCC 204508 / S288c) (Baker's yeast) protein is Poly(A) RNA polymerase protein 2 (PAP2).